The sequence spans 201 residues: Reticulon-like protein B10 (201 aa).

The Reticulon domain maps to 14–201 (VADLIMWKNR…KPTNKIKKMQ (188 aa)). 3 helical membrane passes run 25–45 (GGFLLLGSTTLLWFLFEKCGY), 46–66 (SFFPFVVNTQLLSVVILFLWA), and 135–155 (FLNFLTILYLGVVLSLLIPFL).

It is found in the endoplasmic reticulum membrane. This chain is Reticulon-like protein B10 (RTNLB10), found in Arabidopsis thaliana (Mouse-ear cress).